A 597-amino-acid chain; its full sequence is Lysine--tRNA ligase (597 aa).

Mg(2+) contacts are provided by Glu501 and Glu508.

It belongs to the class-II aminoacyl-tRNA synthetase family. In terms of assembly, homodimer. The cofactor is Mg(2+).

It is found in the cytoplasm. The catalysed reaction is tRNA(Lys) + L-lysine + ATP = L-lysyl-tRNA(Lys) + AMP + diphosphate. This is Lysine--tRNA ligase (lysS) from Aquifex aeolicus (strain VF5).